Reading from the N-terminus, the 185-residue chain is MKLLGISGTLVGTKTCILVEQVLVEAKRICPEVDIQLLDLKDYQVEFCDGRQQSSYNEDTQKVIELVSVADCYVIGTPIFQGSITGALKNLFDLISPQALRHKVMGFVANGGTYQHYLVIENQLKPIASFFRAFVAPGSVYAHTDHFNEKNELVDPEVRERVAQLAWEVVHMHWSLKSGGVHAHR.

In terms of assembly, anthranilate 3-monooxygenase consists of a reductase component (GTNG_3158) and an oxygenase component HpaH.

The enzyme catalyses FADH2 + NAD(+) = FAD + NADH + 2 H(+). The catalysed reaction is FADH2 + NADP(+) = FAD + NADPH + 2 H(+). Its function is as follows. Involved in the pathway of tryptophan degradation. Reduces FAD/FMN to FADH(2)/FMNH(2), which are subsequently used for the hydroxylation of anthranilate. It can reduce either FAD or flavin mononucleotide (FMN) but prefers FAD. The enzyme has a slight preference for NADPH as acceptor. The sequence is that of NAD(P)H-dependent FAD/FMN reductase GTNG_3158 from Geobacillus thermodenitrificans (strain NG80-2).